Here is a 414-residue protein sequence, read N- to C-terminus: Coenzyme A biosynthesis bifunctional protein CoaBC (414 aa).

A phosphopantothenoylcysteine decarboxylase region spans residues 1 to 191 (MSARKRIVVG…ALPYDMAGVK (191 aa)). The interval 192-414 (ALVTAGGTRE…IAAFLKSQDG (223 aa)) is phosphopantothenate--cysteine ligase. CTP-binding positions include 275–277 (MAA), Asp281, Lys291, 293–294 (KK), 308–311 (DDVL), Phe332, Lys350, and Lys354.

It in the N-terminal section; belongs to the HFCD (homo-oligomeric flavin containing Cys decarboxylase) superfamily. The protein in the C-terminal section; belongs to the PPC synthetase family. In terms of assembly, homododecamer. It depends on Mg(2+) as a cofactor. The cofactor is FMN.

The enzyme catalyses N-[(R)-4-phosphopantothenoyl]-L-cysteine + H(+) = (R)-4'-phosphopantetheine + CO2. It carries out the reaction (R)-4'-phosphopantothenate + L-cysteine + CTP = N-[(R)-4-phosphopantothenoyl]-L-cysteine + CMP + diphosphate + H(+). The protein operates within cofactor biosynthesis; coenzyme A biosynthesis; CoA from (R)-pantothenate: step 2/5. It functions in the pathway cofactor biosynthesis; coenzyme A biosynthesis; CoA from (R)-pantothenate: step 3/5. Two related chemical scaffolds that potently inhibit the activity of the CoaB moiety of CoaBC through a cryptic allosteric site that sits in the dimer interface region of the CoaB enzyme were identified. Functionally, catalyzes two sequential steps in the biosynthesis of coenzyme A. In the first step cysteine is conjugated to 4'-phosphopantothenate to form 4-phosphopantothenoylcysteine. In the second step the latter compound is decarboxylated to form 4'-phosphopantotheine. This chain is Coenzyme A biosynthesis bifunctional protein CoaBC, found in Mycolicibacterium smegmatis (strain ATCC 700084 / mc(2)155) (Mycobacterium smegmatis).